A 296-amino-acid polypeptide reads, in one-letter code: Ribosomal RNA small subunit methyltransferase H (296 aa).

S-adenosyl-L-methionine is bound by residues 41–43 (GGH), D60, F87, D103, and Q110.

Belongs to the methyltransferase superfamily. RsmH family.

Its subcellular location is the cytoplasm. The catalysed reaction is cytidine(1402) in 16S rRNA + S-adenosyl-L-methionine = N(4)-methylcytidine(1402) in 16S rRNA + S-adenosyl-L-homocysteine + H(+). In terms of biological role, specifically methylates the N4 position of cytidine in position 1402 (C1402) of 16S rRNA. The chain is Ribosomal RNA small subunit methyltransferase H from Synechococcus elongatus (strain ATCC 33912 / PCC 7942 / FACHB-805) (Anacystis nidulans R2).